A 351-amino-acid polypeptide reads, in one-letter code: Outer membrane protein A (351 aa).

Positions 1-21 are cleaved as a signal peptide; that stretch reads MKKTAIAIAVALAGFATVAQA. A run of 8 beta stranded transmembrane segments spans residues 27 to 37, 55 to 66, 70 to 78, 96 to 107, 112 to 120, 147 to 156, 161 to 168, and 187 to 195; these read TWYTGAKLGWS, QLGAGAFGGYQV, VGFEMGYDW, QGVQLTAKLGYP, LDIYTRLGG, PVFAGGVEWA, IATRLEYQ, and LLSLGVSYR. 4 consecutive repeat copies span residues 206–207, 208–209, 210–211, and 212–213. The interval 206-213 is 4 X 2 AA tandem repeats of A-P; that stretch reads APAPAPAP. Positions 215 to 343 constitute an OmpA-like domain; the sequence is VQTKHFTLKS…RVEIEVKGIK (129 aa). Cysteines 316 and 328 form a disulfide.

It belongs to the outer membrane OOP (TC 1.B.6) superfamily. OmpA family. As to quaternary structure, monomer and homodimer.

Its subcellular location is the cell outer membrane. In terms of biological role, with TolR probably plays a role in maintaining the position of the peptidoglycan cell wall in the periplasm. Acts as a porin with low permeability that allows slow penetration of small solutes; an internal gate slows down solute passage. Functionally, required for conjugation with F-type plasmids; probably serves as the mating receptor on recipient cells. This is Outer membrane protein A from Escherichia fergusonii (strain ATCC 35469 / DSM 13698 / CCUG 18766 / IAM 14443 / JCM 21226 / LMG 7866 / NBRC 102419 / NCTC 12128 / CDC 0568-73).